Reading from the N-terminus, the 120-residue chain is NAD(P)H-quinone oxidoreductase subunit 3 (120 aa).

Transmembrane regions (helical) follow at residues 10–30 (LLVF…ASAL), 64–84 (MFAL…PWAV), and 89–109 (LGLL…VGLV).

It belongs to the complex I subunit 3 family. As to quaternary structure, NDH-1 can be composed of about 15 different subunits; different subcomplexes with different compositions have been identified which probably have different functions.

The protein localises to the cellular thylakoid membrane. The catalysed reaction is a plastoquinone + NADH + (n+1) H(+)(in) = a plastoquinol + NAD(+) + n H(+)(out). It catalyses the reaction a plastoquinone + NADPH + (n+1) H(+)(in) = a plastoquinol + NADP(+) + n H(+)(out). NDH-1 shuttles electrons from an unknown electron donor, via FMN and iron-sulfur (Fe-S) centers, to quinones in the respiratory and/or the photosynthetic chain. The immediate electron acceptor for the enzyme in this species is believed to be plastoquinone. Couples the redox reaction to proton translocation, and thus conserves the redox energy in a proton gradient. Cyanobacterial NDH-1 also plays a role in inorganic carbon-concentration. This chain is NAD(P)H-quinone oxidoreductase subunit 3, found in Synechococcus sp. (strain JA-3-3Ab) (Cyanobacteria bacterium Yellowstone A-Prime).